Here is a 320-residue protein sequence, read N- to C-terminus: o-succinylbenzoate synthase (320 aa).

The Proton donor role is filled by K133. Positions 161, 190, and 213 each coordinate Mg(2+). K235 (proton acceptor) is an active-site residue.

It belongs to the mandelate racemase/muconate lactonizing enzyme family. MenC type 1 subfamily. The cofactor is a divalent metal cation.

The enzyme catalyses (1R,6R)-6-hydroxy-2-succinyl-cyclohexa-2,4-diene-1-carboxylate = 2-succinylbenzoate + H2O. Its pathway is quinol/quinone metabolism; 1,4-dihydroxy-2-naphthoate biosynthesis; 1,4-dihydroxy-2-naphthoate from chorismate: step 4/7. It functions in the pathway quinol/quinone metabolism; menaquinone biosynthesis. Converts 2-succinyl-6-hydroxy-2,4-cyclohexadiene-1-carboxylate (SHCHC) to 2-succinylbenzoate (OSB). This Salmonella paratyphi A (strain ATCC 9150 / SARB42) protein is o-succinylbenzoate synthase.